The following is a 122-amino-acid chain: Small ribosomal subunit protein uS13 (122 aa).

A disordered region spans residues 97-122 (PVRGQRTHTNARTRKGPAKAIAGKKK).

The protein belongs to the universal ribosomal protein uS13 family. Part of the 30S ribosomal subunit. Forms a loose heterodimer with protein S19. Forms two bridges to the 50S subunit in the 70S ribosome.

Located at the top of the head of the 30S subunit, it contacts several helices of the 16S rRNA. In the 70S ribosome it contacts the 23S rRNA (bridge B1a) and protein L5 of the 50S subunit (bridge B1b), connecting the 2 subunits; these bridges are implicated in subunit movement. Contacts the tRNAs in the A and P-sites. The protein is Small ribosomal subunit protein uS13 of Bartonella quintana (strain Toulouse) (Rochalimaea quintana).